We begin with the raw amino-acid sequence, 644 residues long: Exoribonuclease 2 (644 aa).

Residues 189-516 (RRDLTALDFV…NHRLLKAIIK (328 aa)) form the RNB domain. The S1 motif domain occupies 561–643 (DTRFAAEILD…ETRSIIARPA (83 aa)).

This sequence belongs to the RNR ribonuclease family. RNase II subfamily.

The protein resides in the cytoplasm. The catalysed reaction is Exonucleolytic cleavage in the 3'- to 5'-direction to yield nucleoside 5'-phosphates.. In terms of biological role, involved in mRNA degradation. Hydrolyzes single-stranded polyribonucleotides processively in the 3' to 5' direction. This is Exoribonuclease 2 from Klebsiella pneumoniae (strain 342).